A 258-amino-acid polypeptide reads, in one-letter code: 14-3-3 protein 6 (258 aa).

The tract at residues 238-258 (DMQDDGTDEIKEATPKPDDNE) is disordered. A compositionally biased stretch (basic and acidic residues) spans 245 to 258 (DEIKEATPKPDDNE).

Belongs to the 14-3-3 family. As to quaternary structure, homodimer.

This is 14-3-3 protein 6 (TFT6) from Solanum lycopersicum (Tomato).